The following is a 104-amino-acid chain: Pole-localizer protein TmaR (104 aa).

2 coiled-coil regions span residues 7–34 (IVNQ…NRKR) and 76–96 (SAEI…LTEE).

The protein belongs to the pole-localizer TmaR family.

It is found in the cytoplasm. Functionally, pole-localizer protein involved in the regulation of several cellular processes. The polypeptide is Pole-localizer protein TmaR (Vibrio campbellii (strain ATCC BAA-1116)).